The primary structure comprises 69 residues: Large ribosomal subunit protein bL31 (69 aa).

Zn(2+)-binding residues include cysteine 16, cysteine 18, cysteine 36, and cysteine 39.

Belongs to the bacterial ribosomal protein bL31 family. Type A subfamily. In terms of assembly, part of the 50S ribosomal subunit. Zn(2+) is required as a cofactor.

Functionally, binds the 23S rRNA. This chain is Large ribosomal subunit protein bL31, found in Thermosipho africanus (strain TCF52B).